Consider the following 403-residue polypeptide: Argininosuccinate synthase (403 aa).

ATP is bound by residues 12–20 (AYSGGLDTS) and Ala-39. Tyr-90 and Ser-95 together coordinate L-citrulline. Gly-120 is a binding site for ATP. Residues Thr-122, Asn-126, and Asp-127 each contribute to the L-aspartate site. Asn-126 lines the L-citrulline pocket. 5 residues coordinate L-citrulline: Arg-130, Ser-182, Ser-191, Glu-267, and Tyr-279.

The protein belongs to the argininosuccinate synthase family. Type 1 subfamily. As to quaternary structure, homotetramer.

It is found in the cytoplasm. The catalysed reaction is L-citrulline + L-aspartate + ATP = 2-(N(omega)-L-arginino)succinate + AMP + diphosphate + H(+). It participates in amino-acid biosynthesis; L-arginine biosynthesis; L-arginine from L-ornithine and carbamoyl phosphate: step 2/3. The polypeptide is Argininosuccinate synthase (Vesicomyosocius okutanii subsp. Calyptogena okutanii (strain HA)).